Here is a 453-residue protein sequence, read N- to C-terminus: Glutamyl-tRNA reductase (453 aa).

Residues 52 to 55, Ser105, 110 to 112, and Gln116 contribute to the substrate site; these read TCNR and EDQ. Residue Cys53 is the Nucleophile of the active site. 184-189 is an NADP(+) binding site; it reads GAGEMA. A compositionally biased stretch (low complexity) spans 413–424; the sequence is PGLEPEPTELPT. The segment at 413–453 is disordered; the sequence is PGLEPEPTELPTVPDGPEGVPEELRERMSSGMLEQFSTNDD.

This sequence belongs to the glutamyl-tRNA reductase family. Homodimer.

The catalysed reaction is (S)-4-amino-5-oxopentanoate + tRNA(Glu) + NADP(+) = L-glutamyl-tRNA(Glu) + NADPH + H(+). The protein operates within porphyrin-containing compound metabolism; protoporphyrin-IX biosynthesis; 5-aminolevulinate from L-glutamyl-tRNA(Glu): step 1/2. In terms of biological role, catalyzes the NADPH-dependent reduction of glutamyl-tRNA(Glu) to glutamate 1-semialdehyde (GSA). In Natronomonas pharaonis (strain ATCC 35678 / DSM 2160 / CIP 103997 / JCM 8858 / NBRC 14720 / NCIMB 2260 / Gabara) (Halobacterium pharaonis), this protein is Glutamyl-tRNA reductase.